Here is a 346-residue protein sequence, read N- to C-terminus: N-acetyl-gamma-glutamyl-phosphate reductase (346 aa).

Residue Cys-150 is part of the active site.

It belongs to the NAGSA dehydrogenase family. Type 1 subfamily.

It is found in the cytoplasm. The catalysed reaction is N-acetyl-L-glutamate 5-semialdehyde + phosphate + NADP(+) = N-acetyl-L-glutamyl 5-phosphate + NADPH + H(+). It functions in the pathway amino-acid biosynthesis; L-arginine biosynthesis; N(2)-acetyl-L-ornithine from L-glutamate: step 3/4. Catalyzes the NADPH-dependent reduction of N-acetyl-5-glutamyl phosphate to yield N-acetyl-L-glutamate 5-semialdehyde. The sequence is that of N-acetyl-gamma-glutamyl-phosphate reductase from Desulforudis audaxviator (strain MP104C).